A 143-amino-acid chain; its full sequence is Large ribosomal subunit protein uL15 (143 aa).

Positions 1–56 (MQLNSIKPAAGAKHAKRRVGRGIGSGLGKTAGRGHKGQKSRAGGYHKVGFEGGQMP) are disordered. A compositionally biased stretch (gly residues) spans 21–31 (RGIGSGLGKTA).

Belongs to the universal ribosomal protein uL15 family. Part of the 50S ribosomal subunit.

Its function is as follows. Binds to the 23S rRNA. The chain is Large ribosomal subunit protein uL15 from Verminephrobacter eiseniae (strain EF01-2).